The primary structure comprises 203 residues: uncharacterized protein (203 aa).

Residues 174-203 form a disordered region; that stretch reads LASSKNPRARSPGLDPLGSSETLWSHRGGH.

This is an uncharacterized protein from Homo sapiens (Human).